The following is a 683-amino-acid chain: Long-chain-fatty-acid--CoA ligase 5 (683 aa).

A helical; Signal-anchor for type III membrane protein transmembrane segment spans residues 12–32 (LPTPALICILTFGAAIFLWLI). The residue at position 32 (I32) is a Phosphoserine. At 33–683 (TRPQPVLPLL…IDSLYEHIQD (651 aa)) the chain is on the cytoplasmic side. An N6-acetyllysine modification is found at K361.

This sequence belongs to the ATP-dependent AMP-binding enzyme family. Mg(2+) serves as cofactor.

Its subcellular location is the mitochondrion. The protein localises to the endoplasmic reticulum. It is found in the mitochondrion outer membrane. It localises to the endoplasmic reticulum membrane. The protein resides in the cell membrane. It catalyses the reaction a long-chain fatty acid + ATP + CoA = a long-chain fatty acyl-CoA + AMP + diphosphate. It carries out the reaction (5Z,8Z,11Z,14Z)-eicosatetraenoate + ATP + CoA = (5Z,8Z,11Z,14Z)-eicosatetraenoyl-CoA + AMP + diphosphate. The enzyme catalyses hexadecanoate + ATP + CoA = hexadecanoyl-CoA + AMP + diphosphate. The catalysed reaction is (E)-hexadec-2-enoate + ATP + CoA = (2E)-hexadecenoyl-CoA + AMP + diphosphate. It catalyses the reaction 15-hydroxy-(5Z,8Z,11Z,13E)-eicosatetraenoate + ATP + CoA = 15-hydroxy-(5Z,8Z,11Z,13E)-eicosatetraenoyl-CoA + AMP + diphosphate. It carries out the reaction 12-hydroxy-(5Z,8Z,10E,14Z)-eicosatetraenoate + ATP + CoA = 12-hydroxy-(5Z,8Z,10E,14Z)-eicosatetraenoyl-CoA + AMP + diphosphate. The enzyme catalyses 5-hydroxy-(6E,8Z,11Z,14Z)-eicosatetraenoate + ATP + CoA = 5-hydroxy-(6E,8Z,11Z,14Z)-eicosatetraenoyl-CoA + AMP + diphosphate. The catalysed reaction is 14,15-epoxy-(5Z,8Z,11Z)-eicosatrienoate + ATP + CoA = 14,15-epoxy-(5Z,8Z,11Z)-eicosatrienoyl-CoA + AMP + diphosphate. It catalyses the reaction 11,12-epoxy-(5Z,8Z,14Z)-eicosatrienoate + ATP + CoA = 11,12-epoxy-(5Z,8Z,14Z)-eicosatrienoyl-CoA + AMP + diphosphate. It carries out the reaction (9Z)-octadecenoate + ATP + CoA = (9Z)-octadecenoyl-CoA + AMP + diphosphate. Functionally, catalyzes the conversion of long-chain fatty acids to their active form acyl-CoAs for both synthesis of cellular lipids, and degradation via beta-oxidation. ACSL5 may activate fatty acids from exogenous sources for the synthesis of triacylglycerol destined for intracellular storage. Utilizes a wide range of saturated fatty acids with a preference for C16-C18 unsaturated fatty acids. It was suggested that it may also stimulate fatty acid oxidation. At the villus tip of the crypt-villus axis of the small intestine may sensitize epithelial cells to apoptosis specifically triggered by the death ligand TRAIL. May have a role in the survival of glioma cells. The chain is Long-chain-fatty-acid--CoA ligase 5 from Homo sapiens (Human).